The chain runs to 183 residues: MKQKYEDWLNDVPDNQEDDEDDEIIWVSKSEIKRDAEALKDLGAELVDLGKNALEKIPLDDDLRAAVELAQRIKKEGRRRQLQLIGKMLRARDPEPIQTALDKLNNRHNQQVALFHKLEQLRDRLIEEGDDVVPDILALYPHADRQQLRSLVRNAQKEKAANKPPKSARQIFQYLRELAETTD.

The interval 1–20 (MKQKYEDWLNDVPDNQEDDE) is disordered.

It belongs to the DarP family.

It localises to the cytoplasm. In terms of biological role, member of a network of 50S ribosomal subunit biogenesis factors which assembles along the 30S-50S interface, preventing incorrect 23S rRNA structures from forming. Promotes peptidyl transferase center (PTC) maturation. The chain is Dual-action ribosomal maturation protein DarP from Pectobacterium carotovorum subsp. carotovorum (strain PC1).